Consider the following 216-residue polypeptide: Octanoyltransferase (216 aa).

The region spanning 34–209 is the BPL/LPL catalytic domain; it reads ENTIDEIWLV…KMNQQLDYSH (176 aa). Substrate contacts are provided by residues 73-80, 140-142, and 153-155; these read RGGQITFH, SLG, and GLA. The active-site Acyl-thioester intermediate is cysteine 171.

It belongs to the LipB family.

It is found in the cytoplasm. The catalysed reaction is octanoyl-[ACP] + L-lysyl-[protein] = N(6)-octanoyl-L-lysyl-[protein] + holo-[ACP] + H(+). It functions in the pathway protein modification; protein lipoylation via endogenous pathway; protein N(6)-(lipoyl)lysine from octanoyl-[acyl-carrier-protein]: step 1/2. Catalyzes the transfer of endogenously produced octanoic acid from octanoyl-acyl-carrier-protein onto the lipoyl domains of lipoate-dependent enzymes. Lipoyl-ACP can also act as a substrate although octanoyl-ACP is likely to be the physiological substrate. The protein is Octanoyltransferase of Psychromonas ingrahamii (strain DSM 17664 / CCUG 51855 / 37).